A 144-amino-acid polypeptide reads, in one-letter code: Group IID secretory phospholipase A2 (144 aa).

Positions 1-19 are cleaved as a signal peptide; sequence MRLALLCGLLLAGITATQG. 7 disulfides stabilise this stretch: C45-C137, C47-C63, C62-C117, C68-C144, C69-C110, C78-C103, and C96-C108. Ca(2+)-binding residues include H46, G48, and G50. H66 is an active-site residue. A Ca(2+)-binding site is contributed by D67. Residue N99 is glycosylated (N-linked (GlcNAc...) asparagine). D111 is an active-site residue.

The protein belongs to the phospholipase A2 family. Requires Ca(2+) as cofactor. In terms of tissue distribution, highly expressed in secondary lymphoid tissues, spleen and lymph nodes. Expressed at a lesser extent in thymus. Expressed in CD4-positive, IL2RA/CD25-positive, FOXP3-positive Tregs (at protein level). Expressed in myeloid cell subsets resident in spleen and lymph nodes, ITGAX/CD11C-positive dendritic cells and macrophages (at protein level). Enriched in CD4-positive, ITGAM/CD11B-positive dendritic cell subset. Expressed in pulmonary ITGAX/CD11C-positive dendritic cell subset (at protein level).

The protein localises to the secreted. Its subcellular location is the cell membrane. It is found in the cytoplasm. The enzyme catalyses a 1,2-diacyl-sn-glycero-3-phosphoethanolamine + H2O = a 1-acyl-sn-glycero-3-phosphoethanolamine + a fatty acid + H(+). It catalyses the reaction 1-hexadecanoyl-2-(9Z-octadecenoyl)-sn-glycero-3-phosphoethanolamine + H2O = 1-hexadecanoyl-sn-glycero-3-phosphoethanolamine + (9Z)-octadecenoate + H(+). It carries out the reaction 1-hexadecanoyl-2-(9Z,12Z-octadecadienoyl)-sn-glycero-3-phosphoethanolamine + H2O = 1-hexadecanoyl-sn-glycero-3-phosphoethanolamine + (9Z,12Z)-octadecadienoate + H(+). The catalysed reaction is 1,2-dihexadecanoyl-sn-glycero-3-phospho-(1'-sn-glycerol) + H2O = 1-hexadecanoyl-sn-glycero-3-phospho-(1'-sn-glycerol) + hexadecanoate + H(+). The enzyme catalyses 1-hexadecanoyl-2-(9Z-octadecenoyl)-sn-glycero-3-phospho-(1'-sn-glycerol) + H2O = 1-hexadecanoyl-sn-glycero-3-phospho-(1'-sn-glycerol) + (9Z)-octadecenoate + H(+). It catalyses the reaction a 1,2-diacyl-sn-glycero-3-phosphocholine + H2O = a 1-acyl-sn-glycero-3-phosphocholine + a fatty acid + H(+). It carries out the reaction 1,2-dihexadecanoyl-sn-glycero-3-phosphocholine + H2O = 1-hexadecanoyl-sn-glycero-3-phosphocholine + hexadecanoate + H(+). The catalysed reaction is 1-hexadecanoyl-2-(9Z-octadecenoyl)-sn-glycero-3-phosphocholine + H2O = 1-hexadecanoyl-sn-glycero-3-phosphocholine + (9Z)-octadecenoate + H(+). The enzyme catalyses 1-hexadecanoyl-2-(9Z,12Z-octadecadienoyl)-sn-glycero-3-phosphocholine + H2O = (9Z,12Z)-octadecadienoate + 1-hexadecanoyl-sn-glycero-3-phosphocholine + H(+). It catalyses the reaction 1-hexadecanoyl-2-(4Z,7Z,10Z,13Z,16Z,19Z-docosahexaenoyl)-sn-glycero-3-phosphocholine + H2O = (4Z,7Z,10Z,13Z,16Z,19Z)-docosahexaenoate + 1-hexadecanoyl-sn-glycero-3-phosphocholine + H(+). Its function is as follows. Secretory calcium-dependent phospholipase A2 that primarily targets extracellular lipids, exerting anti-inflammatory and immunosuppressive functions. Hydrolyzes the ester bond of the fatty acyl group attached at sn-2 position of phospholipids (phospholipase A2 activity) with preference for phosphatidylethanolamines and phosphatidylglycerols over phosphatidylcholines. In draining lymph nodes, selectively hydrolyzes diacyl and alkenyl forms of phosphatidylethanolamines, releasing omega-3 polyunsaturated fatty acids (PUFAs) such as eicosapentaenoate and docosahexaenoate that are precursors of the anti-inflammatory lipid mediators, resolvins. During the resolution phase of acute inflammation drives docosahexaenoate-derived resolvin D1 synthesis, which suppresses dendritic cell activation and T-helper 1 immune response. May act in an autocrine and paracrine manner. Via a mechanism independent of its catalytic activity, promotes differentiation of regulatory T cells (Tregs) and participates in the maintenance of immune tolerance. May contribute to lipid remodeling of cellular membranes and generation of lipid mediators involved in pathogen clearance. Displays bactericidal activity against Gram-positive bacteria by directly hydrolyzing phospholipids of the bacterial membrane. The sequence is that of Group IID secretory phospholipase A2 (Pla2g2d) from Mus musculus (Mouse).